The primary structure comprises 191 residues: Rubrerythrin (191 aa).

Residues Met1 to Arg146 form the Ferritin-like diiron domain. Fe(3+)-binding residues include Glu20, Glu53, Glu94, Glu97, Glu128, His131, Cys158, Cys161, Cys174, and Cys177. Residues Ala153 to Trp191 enclose the Rubredoxin-like domain.

In terms of assembly, homodimer. Possesses two rubredoxin-like centers and two non-sulfur oxo-bridged di-iron centers per dimer. Fe(3+) is required as a cofactor.

It localises to the cytoplasm. Functionally, may provide oxidative stress protection via catalytic reduction of intracellular hydrogen peroxide. This Nitratidesulfovibrio vulgaris (strain ATCC 29579 / DSM 644 / CCUG 34227 / NCIMB 8303 / VKM B-1760 / Hildenborough) (Desulfovibrio vulgaris) protein is Rubrerythrin (rbr).